The following is a 313-amino-acid chain: D-alanine--D-alanine ligase (313 aa).

The ATP-grasp domain maps to 108-308 (KLVWQQLGIP…YQELVVKVLA (201 aa)). 138 to 193 (VAKLGLPLFVKPASEGSSVAVIKVKTADALVPALEEAVKFDKIVVVEKSIEGGGEY) lines the ATP pocket. Mg(2+)-binding residues include aspartate 262, glutamate 275, and asparagine 277.

It belongs to the D-alanine--D-alanine ligase family. Requires Mg(2+) as cofactor. Mn(2+) serves as cofactor.

Its subcellular location is the cytoplasm. The catalysed reaction is 2 D-alanine + ATP = D-alanyl-D-alanine + ADP + phosphate + H(+). It functions in the pathway cell wall biogenesis; peptidoglycan biosynthesis. Cell wall formation. The sequence is that of D-alanine--D-alanine ligase from Paraburkholderia phymatum (strain DSM 17167 / CIP 108236 / LMG 21445 / STM815) (Burkholderia phymatum).